Here is a 904-residue protein sequence, read N- to C-terminus: DNA mismatch repair protein MutS (904 aa).

ATP is bound at residue 638-645; that stretch reads GPNMAGKS. The segment at 825–869 is disordered; that stretch reads KSKADGTRRPASYHEAQPLLPGMPEPPSTASAEPPQTVTPPEPPV.

Belongs to the DNA mismatch repair MutS family.

This protein is involved in the repair of mismatches in DNA. It is possible that it carries out the mismatch recognition step. This protein has a weak ATPase activity. The chain is DNA mismatch repair protein MutS from Oleidesulfovibrio alaskensis (strain ATCC BAA-1058 / DSM 17464 / G20) (Desulfovibrio alaskensis).